Consider the following 1358-residue polypeptide: DNA-directed RNA polymerase subunit beta (1358 aa).

Belongs to the RNA polymerase beta chain family. In terms of assembly, the RNAP catalytic core consists of 2 alpha, 1 beta, 1 beta' and 1 omega subunit. When a sigma factor is associated with the core the holoenzyme is formed, which can initiate transcription.

It catalyses the reaction RNA(n) + a ribonucleoside 5'-triphosphate = RNA(n+1) + diphosphate. In terms of biological role, DNA-dependent RNA polymerase catalyzes the transcription of DNA into RNA using the four ribonucleoside triphosphates as substrates. In Azotobacter vinelandii (strain DJ / ATCC BAA-1303), this protein is DNA-directed RNA polymerase subunit beta.